The chain runs to 1189 residues: Pesticidal crystal protein Cry1Ca (1189 aa).

It belongs to the delta endotoxin family.

In terms of biological role, promotes colloidosmotic lysis by binding to the midgut epithelial cells of many lepidopteran larvae including Spodoptera species. The polypeptide is Pesticidal crystal protein Cry1Ca (cry1Ca) (Bacillus thuringiensis subsp. entomocidus).